The sequence spans 580 residues: Extracellular protease (580 aa).

A signal peptide spans 1 to 32; that stretch reads MSTASLRKRTGSLTILGASALTSLLLAMPAFA. A propeptide spanning residues 33–136 is cleaved from the precursor; the sequence is GEVYLDGLAT…VEVDQILHAT (104 aa). The region spanning 147 to 465 is the Peptidase S8 domain; sequence QWAFGTTNAG…AGIVNADAAV (319 aa). Residues D177 and H237 each act as charge relay system in the active site. 2 disulfide bridges follow: C225–C273 and C315–C352. Residue S409 is the Charge relay system of the active site. C450 and C454 are joined by a disulfide.

The protein belongs to the peptidase S8 family.

The protein localises to the secreted. This is Extracellular protease from Xanthomonas campestris pv. campestris (strain ATCC 33913 / DSM 3586 / NCPPB 528 / LMG 568 / P 25).